A 280-amino-acid chain; its full sequence is Ribose-phosphate pyrophosphokinase (280 aa).

Residues 32-34 (DGE) and 89-90 (RQ) contribute to the ATP site. Positions 122 and 160 each coordinate Mg(2+). Lysine 183 is an active-site residue. Residues arginine 185, aspartate 209, and 213 to 217 (STGGT) each bind D-ribose 5-phosphate.

This sequence belongs to the ribose-phosphate pyrophosphokinase family. Class III (archaeal) subfamily. Mg(2+) serves as cofactor.

It localises to the cytoplasm. It catalyses the reaction D-ribose 5-phosphate + ATP = 5-phospho-alpha-D-ribose 1-diphosphate + AMP + H(+). Its pathway is metabolic intermediate biosynthesis; 5-phospho-alpha-D-ribose 1-diphosphate biosynthesis; 5-phospho-alpha-D-ribose 1-diphosphate from D-ribose 5-phosphate (route I): step 1/1. Activated by Co(2+) and Ni(2+) ions, however Mg(2+) ion shows almost no significant effect on the activity. Equally inhibited by ADP, CTP and GTP, while dTTP and UTP are less inhibitory. Its function is as follows. Involved in the biosynthesis of the central metabolite phospho-alpha-D-ribosyl-1-pyrophosphate (PRPP) via the transfer of pyrophosphoryl group from ATP to 1-hydroxyl of ribose-5-phosphate (Rib-5-P). It can also use CTP and GTP as substrates in addition to ATP. This is Ribose-phosphate pyrophosphokinase from Thermococcus kodakarensis (strain ATCC BAA-918 / JCM 12380 / KOD1) (Pyrococcus kodakaraensis (strain KOD1)).